A 207-amino-acid chain; its full sequence is Lipid A acyltransferase PagP (207 aa).

Positions 1 to 24 (MKFDLTAACTLSATLLVSSGTVFA) are cleaved as a signal peptide. Residues His79, Asp122, and Ser123 contribute to the active site.

It belongs to the lipid A palmitoyltransferase family. As to quaternary structure, homodimer.

The protein resides in the cell outer membrane. The catalysed reaction is a lipid A + a 1,2-diacyl-sn-glycero-3-phosphocholine = a hepta-acyl lipid A + a 2-acyl-sn-glycero-3-phosphocholine. It catalyses the reaction a lipid IVA + a 1,2-diacyl-sn-glycero-3-phosphocholine = a lipid IVB + a 2-acyl-sn-glycero-3-phosphocholine. It carries out the reaction a lipid IIA + a 1,2-diacyl-sn-glycero-3-phosphocholine = a lipid IIB + a 2-acyl-sn-glycero-3-phosphocholine. Transfers a fatty acid residue from the sn-1 position of a phospholipid to the N-linked hydroxyfatty acid chain on the proximal unit of lipid A or its precursors. This Photorhabdus laumondii subsp. laumondii (strain DSM 15139 / CIP 105565 / TT01) (Photorhabdus luminescens subsp. laumondii) protein is Lipid A acyltransferase PagP.